Reading from the N-terminus, the 441-residue chain is Vacuolar cation/proton exchanger 5 (441 aa).

The N-myristoyl glycine moiety is linked to residue G2. The Cytoplasmic portion of the chain corresponds to 2 to 69 (GCCKVPALIQ…PNNSVLQSFK (68 aa)). 2 S-palmitoyl cysteine lipidation sites follow: C3 and C4. Residues 70–90 (IVILSNKLNLLLPFGPLAILL) form a helical membrane-spanning segment. At 91–97 (HYLTDNK) the chain is on the extracellular side. A helical transmembrane segment spans residues 98 to 118 (GWIFLLSLVGITPLAERLGYA). Residues 119 to 129 (TEQLACYTGST) are Cytoplasmic-facing. A helical transmembrane segment spans residues 130–150 (VGGLLNATFGNVTELIISIFA). The segment at 139–174 (GNVTELIISIFALKSGMIRVVQLTLLGSILSNMLLV) is cation selection. Topologically, residues 151–165 (LKSGMIRVVQLTLLG) are extracellular. The chain crosses the membrane as a helical span at residues 166 to 186 (SILSNMLLVLGCAFFCGGLVF). Residues 187–197 (SQKEQVFDKGN) lie on the Cytoplasmic side of the membrane. The chain crosses the membrane as a helical span at residues 198–218 (AVVNSGLLLMAVMGLLFPAVL). The Extracellular portion of the chain corresponds to 219–231 (HYTHSEVHAGSSE). The helical transmembrane segment at 232–252 (LALSRFSSCIMLVAYAAYLFF) threads the bilayer. The Cytoplasmic portion of the chain corresponds to 253–286 (QLKSQPSSYTPLTEETNQNEETSDDDEDPEISKW). A helical transmembrane segment spans residues 287 to 307 (EAIIWLSILTAWVSLLSGYLV). The Extracellular segment spans residues 308–311 (DAIE). A helical membrane pass occupies residues 312 to 332 (GASVSWKIPISFISVILLPIV). Over 333-354 (GNAAEHAGAIMFAMKDKLDLSL) the chain is Cytoplasmic. The interval 333–368 (GNAAEHAGAIMFAMKDKLDLSLGVAIGSSIQISMFA) is cation selection. The helical transmembrane segment at 355-375 (GVAIGSSIQISMFAVPFCVVI) threads the bilayer. Over 376-384 (GWMMGAQMD) the chain is Extracellular. Residues 385–405 (LNFQLFETATLFITVIVVAFF) traverse the membrane as a helical segment. Residues 406–412 (LQEGTSN) lie on the Cytoplasmic side of the membrane. A helical transmembrane segment spans residues 413-433 (YFKGLMLILCYLIVAASFFVH). Residues 434–441 (EDPHQDDI) are Extracellular-facing.

This sequence belongs to the Ca(2+):cation antiporter (CaCA) (TC 2.A.19) family. Cation/proton exchanger (CAX) subfamily.

It localises to the vacuole membrane. In terms of biological role, vacuolar cation/proton exchanger (CAX). Translocates Ca(2+) and other metal ions into vacuoles using the proton gradient formed by H(+)-ATPase and H(+)-pyrophosphatase. The sequence is that of Vacuolar cation/proton exchanger 5 (CAX5) from Arabidopsis thaliana (Mouse-ear cress).